The chain runs to 302 residues: MSKLLYVRDHEGFACLTVETHRNRWFAAHIVLTKDCGCLKLLNERDLEFYKFLFTFLAMAEKLVNFNIDELVTSFESHDIDHYYTEQKAMENVHGETYANILNMLFDGDRAAMNAYAEAIMADEALQAKISWLRDKVAAAVTLPEKILVFLLIEGIFFISSFYSIALLRVRGLMPGICLANNYISRDELLHTRAASLLYNSMTAKADRPRATWIQELFRTAVEVETAFIEARGEGVTLVDVRAIKQFLEATADRILGDIGQAPLYGTPPPKDCPLTYMTSIKQTNFFEQESSDYTMLVVDDL.

Residues Glu-61, Glu-91, and His-94 each coordinate Fe cation. The active site involves Tyr-98. The helical transmembrane segment at 147-167 (ILVFLLIEGIFFISSFYSIAL) threads the bilayer. Fe cation contacts are provided by Glu-154, Glu-188, and His-191.

The protein belongs to the ribonucleoside diphosphate reductase small chain family. Heterotetramer composed of a homodimer of the large subunit (R1) and a homodimer of the small subunit (R2). Larger multisubunit protein complex are also active, composed of (R1)n(R2)n. Fe cation serves as cofactor.

It is found in the host membrane. The catalysed reaction is a 2'-deoxyribonucleoside 5'-diphosphate + [thioredoxin]-disulfide + H2O = a ribonucleoside 5'-diphosphate + [thioredoxin]-dithiol. Its function is as follows. Ribonucleoside-diphosphate reductase holoenzyme provides the precursors necessary for viral DNA synthesis. Allows virus growth in non-dividing cells, as well as reactivation from latency in infected hosts. Catalyzes the biosynthesis of deoxyribonucleotides from the corresponding ribonucleotides. The polypeptide is Ribonucleoside-diphosphate reductase small subunit (Homo sapiens (Human)).